The chain runs to 170 residues: Large ribosomal subunit protein bL9 (170 aa).

Residues 149 to 170 (RTEEADAEESAAEEPAVEEAAE) are disordered. The segment covering 153-170 (ADAEESAAEEPAVEEAAE) has biased composition (acidic residues).

It belongs to the bacterial ribosomal protein bL9 family.

Binds to the 23S rRNA. This chain is Large ribosomal subunit protein bL9, found in Oleidesulfovibrio alaskensis (strain ATCC BAA-1058 / DSM 17464 / G20) (Desulfovibrio alaskensis).